Here is a 330-residue protein sequence, read N- to C-terminus: Aspartate--ammonia ligase (330 aa).

Belongs to the class-II aminoacyl-tRNA synthetase family. AsnA subfamily.

It is found in the cytoplasm. It catalyses the reaction L-aspartate + NH4(+) + ATP = L-asparagine + AMP + diphosphate + H(+). Its pathway is amino-acid biosynthesis; L-asparagine biosynthesis; L-asparagine from L-aspartate (ammonia route): step 1/1. The sequence is that of Aspartate--ammonia ligase from Haemophilus influenzae (strain 86-028NP).